A 135-amino-acid chain; its full sequence is Methylglyoxal synthase (135 aa).

An MGS-like domain is found at 1–135 (MQKTLALVAH…GLYERAVPEF (135 aa)). Substrate contacts are provided by residues histidine 10, lysine 14, 36–39 (TGTT), and 56–57 (SG). Catalysis depends on aspartate 62, which acts as the Proton donor/acceptor. Histidine 89 is a binding site for substrate.

The protein belongs to the methylglyoxal synthase family.

The catalysed reaction is dihydroxyacetone phosphate = methylglyoxal + phosphate. Its function is as follows. Catalyzes the formation of methylglyoxal from dihydroxyacetone phosphate. The protein is Methylglyoxal synthase of Pseudoalteromonas atlantica (strain T6c / ATCC BAA-1087).